We begin with the raw amino-acid sequence, 236 residues long: Opacity protein opA50 (236 aa).

Residue Ala1 is a signal peptide.

Belongs to the opacity porin family.

The protein localises to the cell outer membrane. Its function is as follows. Implicated in a number of adherence functions. OPA proteins are implicated in pathogenesis and are subject to phase variation. This Neisseria gonorrhoeae protein is Opacity protein opA50 (opaC).